The chain runs to 254 residues: Chalcone isomerase cfoK (254 aa).

Catalysis depends on residues H33 and Y50.

The enzyme catalyses a chalcone = a flavanone.. It participates in secondary metabolite biosynthesis; flavonoid biosynthesis. Functionally, chalcone isomerase; part of the gene cluster that mediates the biosynthesis of chlorflavonin, a fungal flavonoid with acetolactate synthase inhibitory activity. Within the pathway, cfoK acts as chalcone isomerase (CHI), the key enzyme responsible for the tricyclic formation of flavanone through Michael-type intramolecular cyclization of chalcone. The hydrogen at C2'-OH is extracted by the imidazole ring of His-33, which induces the oxa-Michael addition to form the intermediate enolate through 6-endo-trig mode cyclization. The enolate can then be stabilized by a hydrogen bond with the Tyr-50 residue. Following enol tautomerization, the C ring, a gamma-pyranone ring, is formed. The pathway begins with the PKS-NRPS hybrid synthetase cfoA that uses benzoic acid or p-hydroxybenzoic acid as a starter unit with four rounds of chain elongation using malonyl-CoA to form the chalcone skeleton. Then, a new type of chalcone isomerase, cfoK, catalyzes the conversion of the chalcone into a flavanone by a histidine-mediated oxa-Michael addition mechanism. The desaturation of flavanone to flavone is catalyzed by a new type of flavone synthase, the flavin mononucleotide (FMN)-dependent oxidoreductase cfoJ. Monooxygenases cfoF, cfoG, and P450 cfoH are responsible for the hydroxylation of the flavonoid skeleton at sites C3, C8, and C2', respectively. Like cfoF, the dehydratase cfoI plays also a role in the hydroxylation of position C3. Methyltransferases cfoB, cfoC, and cfoD then catalyze the methylation of C7-OH, C8-OH, and C3-OH, respectively. Finally, the monooxygenase cfoE is responsible for the chlorination of flavonoid at position C3'. The chain is Chalcone isomerase cfoK from Aspergillus candidus.